Consider the following 431-residue polypeptide: Dihydroorotase (431 aa).

Positions 59 and 61 each coordinate Zn(2+). Substrate is bound by residues histidine 61–arginine 63 and asparagine 93. Positions 151, 178, 231, and 304 each coordinate Zn(2+). Residue aspartate 304 is part of the active site. Residues histidine 308 and phenylalanine 322–glycine 323 contribute to the substrate site.

It belongs to the metallo-dependent hydrolases superfamily. DHOase family. Class I DHOase subfamily. Zn(2+) is required as a cofactor.

It catalyses the reaction (S)-dihydroorotate + H2O = N-carbamoyl-L-aspartate + H(+). It participates in pyrimidine metabolism; UMP biosynthesis via de novo pathway; (S)-dihydroorotate from bicarbonate: step 3/3. Its function is as follows. Catalyzes the reversible cyclization of carbamoyl aspartate to dihydroorotate. This Thermoanaerobacter sp. (strain X514) protein is Dihydroorotase.